Here is a 210-residue protein sequence, read N- to C-terminus: Claudin-4 (210 aa).

Residues 1-7 (MASMGLQ) lie on the Cytoplasmic side of the membrane. Residues 1–103 (MASMGLQVLG…GMLLSVVGGK (103 aa)) are interaction with EPHA2. A helical membrane pass occupies residues 8 to 28 (VLGISLAVLGWLGIILSCALP). The Extracellular portion of the chain corresponds to 29–81 (MWRVTAFIGSNIVTAQTSWEGLWMNCVVQSTGQMQCKMYDSMLALPQDLQAAR). The cysteines at positions 54 and 64 are disulfide-linked. The chain crosses the membrane as a helical span at residues 82–102 (ALMVISIIVGALGMLLSVVGG). Over 103 to 116 (KCTNCMEDETVKAK) the chain is Cytoplasmic. The chain crosses the membrane as a helical span at residues 117-137 (IMITAGAVFIVASMLIMVPVS). Topologically, residues 138–160 (WTAHNVIRDFYNPMVASGQKREM) are extracellular. A helical transmembrane segment spans residues 161–181 (GASLYVGWAASGLLLLGGGLL). Residues 182–210 (CCSCPPRSNDKPYSAKYSAARSVPASNYV) are Cytoplasmic-facing. Y209 is modified (phosphotyrosine; by EPHA2). Residues 209-210 (YV) are interactions with TJP1, TJP2 and TJP3.

The protein belongs to the claudin family. In terms of assembly, can form heteropolymeric strands with other claudins. Interacts with CLDN8. Interacts with CLDN1. Directly interacts with TJP1/ZO-1, TJP2/ZO-2 and TJP3/ZO-3. Interacts with EPHA2; phosphorylates CLDN4 and may regulate tight junctions. Post-translationally, phosphorylated. Phosphorylation by EPHA2 is stimulated by EFNA1 and alters interaction with TJP1. In terms of tissue distribution, expressed primarily in lung and kidney. Present in both cortical and medullar collecting ducts (at protein level).

It localises to the cell junction. It is found in the tight junction. Its subcellular location is the cell membrane. The catalysed reaction is chloride(in) = chloride(out). It catalyses the reaction bromide(in) = bromide(out). It carries out the reaction iodide(out) = iodide(in). The enzyme catalyses fluoride(in) = fluoride(out). In terms of biological role, can associate with other claudins to regulate tight junction structural and functional strand dynamics. May coassemble with CLDN8 into tight junction strands containing anion-selective channels that convey paracellular chloride permeability in renal collecting ducts. May integrate into CLDN3 strands to modulate localized tight junction barrier properties. May disrupt strand assembly of channel-forming CLDN2 and CLDN15 and inhibit cation conductance. Cannot form tight junction strands on its own. This chain is Claudin-4, found in Mus musculus (Mouse).